The following is a 716-amino-acid chain: Eosinophil peroxidase (716 aa).

Residues 1–18 (MMQQLLALVGALATLILT) form the signal peptide. The propeptide occupies 19-140 (QHAEGTAPAS…SGCALQDQAE (122 aa)). Asn-53 and Asn-114 each carry an N-linked (GlcNAc...) asparagine glycan. Cys-142 and Cys-153 are oxidised to a cystine. Asp-233 is a binding site for heme b. His-234 functions as the Proton acceptor in the catalytic mechanism. Residue Asp-235 participates in Ca(2+) binding. Cystine bridges form between Cys-254/Cys-264 and Cys-258/Cys-282. Ca(2+)-binding residues include Thr-307, Phe-309, Asp-311, and Ser-313. N-linked (GlcNAc...) asparagine glycans are attached at residues Asn-328 and Asn-364. The cysteines at positions 360 and 371 are disulfide-linked. The heme b site is built by Glu-381 and His-475. Tyr-489 carries the 3'-nitrotyrosine modification. 2 disulfides stabilise this stretch: Cys-579–Cys-636 and Cys-677–Cys-702. N-linked (GlcNAc...) asparagine glycosylation occurs at Asn-709.

The protein belongs to the peroxidase family. XPO subfamily. As to quaternary structure, tetramer of two light chains and two heavy chains. Ca(2+) is required as a cofactor. Heme b serves as cofactor.

It is found in the cytoplasmic granule. The enzyme catalyses 2 a phenolic donor + H2O2 = 2 a phenolic radical donor + 2 H2O. Its function is as follows. Mediates tyrosine nitration of secondary granule proteins in mature resting eosinophils. In Mus musculus (Mouse), this protein is Eosinophil peroxidase (Epx).